The sequence spans 74 residues: Hadrucalcin (74 aa).

Positions M1–A27 are cleaved as a signal peptide. Positions R28 to R39 are excised as a propeptide. 3 disulfide bridges follow: C44–C58, C51–C62, and C57–C73. An essential for stimulation of [3H]ryanodine binding to RYR1 region spans residues R64–R65.

As to expression, expressed by the venom gland.

The protein localises to the secreted. This toxin activates ryanodine receptors RyR1 and RyR2 by inducing a long-lasting subconductance state (35% of the full conductance stateon RyR1). Furthermore, it triggers calcium release from sarcoplasmic vesicles (11.8 nM are enough to induce a sharp release on RyR1, and 55% of the total calcium is released after toxin (100 nM) addition on RyR1) probably by acting as a cell-penetrating peptide (CPP). In addition, it has been shown to dose-dependently stimulate ryanodine binding to RyR1 (EC(50)=14.8 nM). It also augments the bell-shaped calcium-[3H]ryanodine binding curve that is maximal at about 10 uM calcium concentration. It binds a different site as ryanodine. It acts synergistically with caffeine. In vivo, intracerebroventricular injection into mice induces neurotoxic symptoms, followed by death. This chain is Hadrucalcin, found in Hoffmannihadrurus gertschi (Scorpion).